Consider the following 125-residue polypeptide: UPF0102 protein CCNA_00142 (125 aa).

The protein belongs to the UPF0102 family.

This is UPF0102 protein CCNA_00142 from Caulobacter vibrioides (strain NA1000 / CB15N) (Caulobacter crescentus).